A 300-amino-acid polypeptide reads, in one-letter code: Inosose dehydratase (300 aa).

This sequence belongs to the IolE/MocC family. It depends on glutathione as a cofactor. Co(2+) is required as a cofactor. The cofactor is Mn(2+).

The enzyme catalyses scyllo-inosose = 3D-3,5/4-trihydroxycyclohexane-1,2-dione + H2O. The protein operates within polyol metabolism; myo-inositol degradation into acetyl-CoA; acetyl-CoA from myo-inositol: step 2/7. Functionally, catalyzes the dehydration of inosose (2-keto-myo-inositol, 2KMI or 2,4,6/3,5-pentahydroxycyclohexanone) to 3D-(3,5/4)-trihydroxycyclohexane-1,2-dione (D-2,3-diketo-4-deoxy-epi-inositol). The sequence is that of Inosose dehydratase from Bacillus licheniformis (strain ATCC 14580 / DSM 13 / JCM 2505 / CCUG 7422 / NBRC 12200 / NCIMB 9375 / NCTC 10341 / NRRL NRS-1264 / Gibson 46).